Here is a 272-residue protein sequence, read N- to C-terminus: Cerberus (272 aa).

A signal peptide spans Met1–Pro19. 4 cysteine pairs are disulfide-bonded: Cys168/Cys215, Cys182/Cys229, Cys192/Cys245, and Cys196/Cys247. One can recognise a CTCK domain in the interval Cys168–Glu253. Asn228 carries N-linked (GlcNAc...) asparagine glycosylation.

Belongs to the DAN family.

The protein resides in the secreted. Cytokine that acts as a regulator of the activity of Nodal/BMP pathways during the establishment of bilateral asymmetry in the head and trunk of the embryo. In Gallus gallus (Chicken), this protein is Cerberus (CER1).